The sequence spans 168 residues: Bifunctional protein PyrR (168 aa).

Substrate is bound by residues 36–37 (TG), R77, 94–102 (DDVLMSGRT), and V151. Positions 90-102 (LVLIDDVLMSGRT) match the PRPP-binding motif.

This sequence belongs to the purine/pyrimidine phosphoribosyltransferase family. PyrR subfamily.

The enzyme catalyses UMP + diphosphate = 5-phospho-alpha-D-ribose 1-diphosphate + uracil. Its function is as follows. Regulates the transcription of the pyrimidine nucleotide (pyr) operon in response to exogenous pyrimidines. Functionally, also displays a weak uracil phosphoribosyltransferase activity which is not physiologically significant. In Pseudomonas fluorescens, this protein is Bifunctional protein PyrR.